Reading from the N-terminus, the 628-residue chain is Zinc finger protein 555 (628 aa).

Residues Val-4–Asn-77 enclose the KRAB domain. The C2H2-type 1; degenerate zinc-finger motif lies at Tyr-172 to His-194. C2H2-type zinc fingers lie at residues Tyr-200 to His-222, Tyr-228 to His-250, Tyr-256 to His-278, Tyr-284 to His-306, His-312 to His-334, Tyr-340 to His-362, Tyr-368 to His-390, Tyr-396 to His-418, Tyr-424 to His-446, Tyr-452 to His-474, Tyr-480 to His-502, Tyr-508 to His-530, Tyr-536 to His-558, and Tyr-564 to His-586.

Belongs to the krueppel C2H2-type zinc-finger protein family.

The protein resides in the nucleus. In terms of biological role, may be involved in transcriptional regulation. This Homo sapiens (Human) protein is Zinc finger protein 555 (ZNF555).